Reading from the N-terminus, the 141-residue chain is Protein C19orf12 homolog (141 aa).

Residues 33–53 form a helical membrane-spanning segment; the sequence is LVAAAGAFLGGLVGGPPGIAV.

This sequence belongs to the C19orf12 family.

The protein localises to the mitochondrion. It localises to the mitochondrion membrane. Its subcellular location is the endoplasmic reticulum. The protein resides in the cytoplasm. It is found in the cytosol. This chain is Protein C19orf12 homolog, found in Xenopus tropicalis (Western clawed frog).